A 418-amino-acid polypeptide reads, in one-letter code: UDP-N-acetylglucosamine 1-carboxyvinyltransferase 2 (418 aa).

22–23 is a binding site for phosphoenolpyruvate; that stretch reads KN. R93 is a binding site for UDP-N-acetyl-alpha-D-glucosamine. C117 acts as the Proton donor in catalysis. Position 117 is a 2-(S-cysteinyl)pyruvic acid O-phosphothioketal (C117). UDP-N-acetyl-alpha-D-glucosamine-binding positions include 122–126, D305, and I327; that span reads RPIDQ.

The protein belongs to the EPSP synthase family. MurA subfamily.

It is found in the cytoplasm. It carries out the reaction phosphoenolpyruvate + UDP-N-acetyl-alpha-D-glucosamine = UDP-N-acetyl-3-O-(1-carboxyvinyl)-alpha-D-glucosamine + phosphate. It participates in cell wall biogenesis; peptidoglycan biosynthesis. Cell wall formation. Adds enolpyruvyl to UDP-N-acetylglucosamine. The chain is UDP-N-acetylglucosamine 1-carboxyvinyltransferase 2 from Clostridium acetobutylicum (strain ATCC 824 / DSM 792 / JCM 1419 / IAM 19013 / LMG 5710 / NBRC 13948 / NRRL B-527 / VKM B-1787 / 2291 / W).